Here is a 547-residue protein sequence, read N- to C-terminus: Cilia- and flagella- associated protein 210 (547 aa).

Residues 184–254 (KLNVEKAFKE…EIEMKKKQGK (71 aa)) adopt a coiled-coil conformation. The interval 210 to 237 (KDHLKQIKEHEEEEERRRKEEEKDAEEI) is disordered.

In terms of assembly, microtubule inner protein component of sperm flagellar doublet microtubules. Expressed in trachea multiciliated cells.

The protein localises to the cytoplasm. Its subcellular location is the cytoskeleton. It is found in the cilium axoneme. The protein resides in the flagellum axoneme. Microtubule inner protein (MIP) part of the dynein-decorated doublet microtubules (DMTs) in cilia axoneme, which is required for motile cilia beating. This chain is Cilia- and flagella- associated protein 210 (CFAP210), found in Bos taurus (Bovine).